Reading from the N-terminus, the 158-residue chain is Cyclic pyranopterin monophosphate synthase (158 aa).

Residues 75 to 77 (LCH) and 113 to 114 (ME) each bind substrate. D128 is a catalytic residue.

The protein belongs to the MoaC family. As to quaternary structure, homohexamer; trimer of dimers.

It catalyses the reaction (8S)-3',8-cyclo-7,8-dihydroguanosine 5'-triphosphate = cyclic pyranopterin phosphate + diphosphate. Its pathway is cofactor biosynthesis; molybdopterin biosynthesis. Its function is as follows. Catalyzes the conversion of (8S)-3',8-cyclo-7,8-dihydroguanosine 5'-triphosphate to cyclic pyranopterin monophosphate (cPMP). The sequence is that of Cyclic pyranopterin monophosphate synthase from Vibrio campbellii (strain ATCC BAA-1116).